The following is a 168-amino-acid chain: CASP-like protein UU-1 (168 aa).

The Cytoplasmic segment spans residues 1–17 (MVELESQEAVTVASTAD). The helical transmembrane segment at 18 to 38 (IAVDVSLRLLAAATSLAAAVV) threads the bilayer. Topologically, residues 39 to 54 (VAANHQQRWGIRVDFT) are extracellular. Residues 55–75 (LFQVWIGFVAVNLVCTVYAAA) form a helical membrane-spanning segment. At 76–95 (TAAAAARKAMGRWWLHHADA) the chain is on the cytoplasmic side. Residues 96–116 (VVVNLEAAATAGAGAIGSIAM) form a helical membrane-spanning segment. Over 117-136 (WGNEASGWYAVCRLYRRYCN) the chain is Extracellular. The chain crosses the membrane as a helical span at residues 137 to 157 (AGAAALALSLAAVLLLGVACA). Over 158–168 (RSRYPKMPPTT) the chain is Cytoplasmic.

This sequence belongs to the Casparian strip membrane proteins (CASP) family. As to quaternary structure, homodimer and heterodimers.

It localises to the cell membrane. The polypeptide is CASP-like protein UU-1 (Oryza sativa subsp. japonica (Rice)).